Reading from the N-terminus, the 372-residue chain is MTQAKDHAMNIGVFIPIGNNGWLLSENAPQYMPSFDLNKQITLKAEQHGLDFVLSMIKLRGFGGKTEFWDHNLESFTLMAGLAAVTSRIKLYATAPTLCLPPAIVARMASTIDSISNGRFGLNLVTGWQRPEYAQMGLWPGDEYFGRRYEYLSEYAQVLRELWETGRSDLKGEFFQMEDCRLSPRPQAEMKIICAGQSAAGMAFTATYADYNFCFGKGVNTPTAFAPTVERLEEAKAKTGRDVSSYVLFMVISDETDEAARAKWEHYKAGADAEAIAWLGLQGAADTKSGADTNIRQMADPTSAVNINMGTLVGSHATVAALLDEVVTVPGTGGVLLVFDDFLKGLDDFGTKIQPLMRSRRHVTGEALAEVA.

FMN contacts are provided by residues Ile-57 to Lys-58, Asn-123, Glu-132, Arg-148 to Tyr-149, and Ser-198.

The protein belongs to the NtaA/SnaA/DszA monooxygenase family. RutA subfamily.

It catalyses the reaction uracil + FMNH2 + NADH + O2 = (Z)-3-ureidoacrylate + FMN + NAD(+) + H2O + H(+). The enzyme catalyses thymine + FMNH2 + NADH + O2 = (Z)-2-methylureidoacrylate + FMN + NAD(+) + H2O + H(+). Its function is as follows. Catalyzes the pyrimidine ring opening between N-3 and C-4 by an unusual flavin hydroperoxide-catalyzed mechanism, adding oxygen atoms in the process to yield ureidoacrylate peracid, that immediately reacts with FMN forming ureidoacrylate and FMN-N(5)-oxide. The FMN-N(5)-oxide reacts spontaneously with NADH to produce FMN. Requires the flavin reductase RutF to regenerate FMN in vivo. The protein is Pyrimidine monooxygenase RutA of Methylorubrum extorquens (strain PA1) (Methylobacterium extorquens).